Consider the following 360-residue polypeptide: 1-deoxy-D-xylulose 5-phosphate reductoisomerase (360 aa).

5 residues coordinate NADPH: serine 7, glycine 8, serine 9, isoleucine 10, and asparagine 115. Lysine 116 is a binding site for 1-deoxy-D-xylulose 5-phosphate. Glutamate 117 serves as a coordination point for NADPH. Mn(2+) is bound at residue aspartate 135. Residues serine 136, glutamate 137, serine 159, and histidine 182 each coordinate 1-deoxy-D-xylulose 5-phosphate. A Mn(2+)-binding site is contributed by glutamate 137. Glycine 188 serves as a coordination point for NADPH. Residues serine 195, asparagine 200, lysine 201, and glutamate 204 each coordinate 1-deoxy-D-xylulose 5-phosphate. Mn(2+) is bound at residue glutamate 204.

The protein belongs to the DXR family. Requires Mg(2+) as cofactor. The cofactor is Mn(2+).

It carries out the reaction 2-C-methyl-D-erythritol 4-phosphate + NADP(+) = 1-deoxy-D-xylulose 5-phosphate + NADPH + H(+). It functions in the pathway isoprenoid biosynthesis; isopentenyl diphosphate biosynthesis via DXP pathway; isopentenyl diphosphate from 1-deoxy-D-xylulose 5-phosphate: step 1/6. Its function is as follows. Catalyzes the NADPH-dependent rearrangement and reduction of 1-deoxy-D-xylulose-5-phosphate (DXP) to 2-C-methyl-D-erythritol 4-phosphate (MEP). In Campylobacter fetus subsp. fetus (strain 82-40), this protein is 1-deoxy-D-xylulose 5-phosphate reductoisomerase.